We begin with the raw amino-acid sequence, 1773 residues long: ATP-binding cassette sub-family A member 17 (1773 aa).

The next 3 helical transmembrane spans lie at 22 to 42 (TLVT…VLYL), 262 to 282 (FPLL…NSIL), and 306 to 326 (AWFI…TVLF). Asn-340 is a glycosylation site (N-linked (GlcNAc...) asparagine). Transmembrane regions (helical) follow at residues 342 to 362 (TLIF…AFMM), 372 to 392 (GTVI…YITF), 403 to 423 (ILSC…ISLF), and 444 to 464 (FTQV…VAFL). In terms of domain architecture, ABC transporter 1 spans 525–758 (IEIQHLYKVF…YGAGYYMTII (234 aa)). 561 to 568 (GHNGAGKT) contacts ATP. An N-linked (GlcNAc...) asparagine glycan is attached at Asn-615. 7 helical membrane passes run 912–932 (LVLS…LSFF), 1088–1108 (LVVN…ILTV), 1134–1154 (LLWD…VFFW), 1166–1186 (IPAV…LVYT), 1198–1218 (CVKL…LVTV), 1236–1256 (IFLI…YYNF), and 1293–1313 (IGKY…LLFL). Asn-1340 carries N-linked (GlcNAc...) asparagine glycosylation. Residues 1369–1602 (LVVKELSKVY…FGSGYSLQAK (234 aa)) enclose the ABC transporter 2 domain. 1404-1411 (GLNGAGKT) is an ATP binding site. Positions 1690-1773 (NIQQGQAALD…SQPPSEPVLL (84 aa)) are disordered. Positions 1700–1710 (SSLSPSNSRPI) are enriched in low complexity. 2 stretches are compositionally biased toward pro residues: residues 1711-1740 (SSPP…PSRP) and 1763-1773 (PSQPPSEPVLL).

This sequence belongs to the ABC transporter superfamily. ABCA family. N-glycosylated.

The protein resides in the endoplasmic reticulum membrane. It is found in the cytoplasm. The enzyme catalyses cholesterol(in) + ATP + H2O = cholesterol(out) + ADP + phosphate + H(+). Functionally, promotes cholesterol efflux from sperm which renders sperm capable of fertilization. Has also been shown to decrease levels of intracellular esterified neutral lipids including cholesteryl esters, fatty acid esters and triacylglycerols. The polypeptide is ATP-binding cassette sub-family A member 17 (Rattus norvegicus (Rat)).